The chain runs to 492 residues: FAD-containing monooxygenase EthA (492 aa).

Residues Ser-15, Glu-36, 44 to 47 (TWDL), Asp-56, and Val-104 contribute to the FAD site. Position 54 to 56 (54 to 56 (RSD)) interacts with NADP(+). Residues 183–189 (SGATAVT) and 207–208 (RS) each bind NADP(+).

It belongs to the FAD-binding monooxygenase family. The cofactor is FAD.

It localises to the cell membrane. It catalyses the reaction ethionamide + NADPH + O2 + H(+) = ethionamide S-oxide + NADP(+) + H2O. Functionally, monooxygenase able to convert a wide range of ketones to the corresponding esters or lactones via a Baeyer-Villiger oxidation reaction. Can act on long-chain aliphatic ketones (2-hexanone to 2-dodecanone) and on aromatic ketones (phenylacetone and benzylacetone). Is also able to catalyze enantioselective sulfoxidation of methyl-p-tolylsulfide. In vivo, likely functions as a BVMO, but the exact nature of the physiological substrate(s) remains to be established. Is responsible for the activation of several thiocarbamide-containing pro-drugs, such as ethionamide (ETH), isoxyl (ISO) and thiacetazone (TAC), into reactive species. The chain is FAD-containing monooxygenase EthA (ethA) from Mycolicibacterium smegmatis (strain ATCC 700084 / mc(2)155) (Mycobacterium smegmatis).